Consider the following 453-residue polypeptide: Serine/threonine-protein phosphatase 2A 55 kDa regulatory subunit B delta isoform (453 aa).

4 WD repeats span residues 32 to 71 (AEAD…KSRP), 97 to 138 (EIEE…KRAE), 181 to 219 (AHTY…RSFN), and 230 to 270 (ELTE…LCDR). Residue S285 is modified to Phosphoserine. WD repeat units lie at residues 289–327 (EIIS…RPVE), 344–385 (ENDC…DVTL), and 420–452 (DFNK…QDKI). Phosphotyrosine is present on Y305. T308 bears the Phosphothreonine mark.

It belongs to the phosphatase 2A regulatory subunit B family. As to quaternary structure, PP2A consists of a common heterodimeric core enzyme, composed of a 36 kDa catalytic subunit (subunit C) and a 65 kDa constant regulatory subunit (PR65 or subunit A), that associates with a variety of regulatory subunits. Proteins that associate with the core dimer include three families of regulatory subunits B (the R2/B/PR55/B55, R3/B''/PR72/PR130/PR59 and R5/B'/B56 families), the 48 kDa variable regulatory subunit, viral proteins, and cell signaling molecules. Interacts with ENSA (when phosphorylated at 'Ser-67') and ARPP19 (when phosphorylated at 'Ser-62'), leading to inhibit PP2A activity. Interacts with IER5.

It localises to the cytoplasm. Functionally, substrate-recognition subunit of protein phosphatase 2A (PP2A) that plays a key role in cell cycle by controlling mitosis entry and exit. Involved in chromosome clustering during late mitosis by mediating dephosphorylation of MKI67. The activity of PP2A complexes containing PPP2R2D (PR55-delta) fluctuate during the cell cycle: the activity is high in interphase and low in mitosis. In Homo sapiens (Human), this protein is Serine/threonine-protein phosphatase 2A 55 kDa regulatory subunit B delta isoform (PPP2R2D).